A 279-amino-acid polypeptide reads, in one-letter code: Ethanolamine utilization protein EutJ (279 aa).

Belongs to the EutJ family.

The protein operates within amine and polyamine degradation; ethanolamine degradation. Its function is as follows. May protect ethanolamine ammonia-lyase (EAL, eutB-eutC) from inhibition, may function in assembling the bacterial microcompartment and/or in refolding EAL, suggesting it may have chaperone activity. Overexpression of eutJ and eutS in E.coli leads to multiple BMC-like structures; eutS expression alone leads to 1 BMC-like structure per cell. In terms of biological role, expression of the eut operon allows this bacteria to use ethanolamine (EA) as a carbon, nitrogen and energy source. It relies on cobalamin (vitamin B12) both as a cofactor for the ethanolamine ammonia-lyase (EAL) activity and to induce the operon. EA enhances bacterial survival in macrophages in a concentration-dependent manner, suggesting it is an important nutrient during infection. The polypeptide is Ethanolamine utilization protein EutJ (Salmonella typhimurium (strain LT2 / SGSC1412 / ATCC 700720)).